We begin with the raw amino-acid sequence, 293 residues long: Formamidopyrimidine-DNA glycosylase (293 aa).

Pro2 functions as the Schiff-base intermediate with DNA in the catalytic mechanism. Glu3 acts as the Proton donor in catalysis. The active-site Proton donor; for beta-elimination activity is the Lys58. DNA is bound by residues His104, Arg123, and Lys166. The FPG-type zinc-finger motif lies at 257-293 (QVYDREGEPCRTDGCEGVVKRFVQNGRSTFWCPKCQR). Arg283 acts as the Proton donor; for delta-elimination activity in catalysis.

This sequence belongs to the FPG family. In terms of assembly, monomer. Zn(2+) serves as cofactor.

The catalysed reaction is Hydrolysis of DNA containing ring-opened 7-methylguanine residues, releasing 2,6-diamino-4-hydroxy-5-(N-methyl)formamidopyrimidine.. It carries out the reaction 2'-deoxyribonucleotide-(2'-deoxyribose 5'-phosphate)-2'-deoxyribonucleotide-DNA = a 3'-end 2'-deoxyribonucleotide-(2,3-dehydro-2,3-deoxyribose 5'-phosphate)-DNA + a 5'-end 5'-phospho-2'-deoxyribonucleoside-DNA + H(+). Its function is as follows. Involved in base excision repair of DNA damaged by oxidation or by mutagenic agents. Acts as a DNA glycosylase that recognizes and removes damaged bases. Has a preference for oxidized purines, such as 7,8-dihydro-8-oxoguanine (8-oxoG). Has AP (apurinic/apyrimidinic) lyase activity and introduces nicks in the DNA strand. Cleaves the DNA backbone by beta-delta elimination to generate a single-strand break at the site of the removed base with both 3'- and 5'-phosphates. This chain is Formamidopyrimidine-DNA glycosylase, found in Bradyrhizobium sp. (strain ORS 278).